The primary structure comprises 451 residues: 12S seed storage protein CRD (451 aa).

An N-terminal signal peptide occupies residues 1–25 (MHKLLFSLLSVVSLSFLLFFHGAEA). Disulfide bonds link Cys-36/Cys-69 and Cys-112/Cys-277. A Phosphoserine modification is found at Ser-39. Cupin type-1 domains are found at residues 42–234 (NSLA…ETAK) and 283–432 (ENID…EEAK). Thr-115 carries the phosphothreonine modification. Residue Ser-302 is modified to Phosphoserine. Thr-396 bears the Phosphothreonine mark. Residue Ser-437 is modified to Phosphoserine.

The protein belongs to the 11S seed storage protein (globulins) family. Hexamer; each subunit is composed of an acidic and a basic chain derived from a single precursor and linked by a disulfide bond. Ubiquitinated. Post-translationally, proteolytically processed during seed maturation at a conserved Asn-Gly peptide bond by an asparaginyl endopeptidase to produce two mature polypeptides referred to as alpha and beta subunits that are joined together by a disulfide bond. In terms of processing, phosphorylated in seeds on some Tyr residues in response to abscisic acid (ABA). In terms of tissue distribution, accumulates in seeds 8 days after anthesis.

The protein resides in the protein storage vacuole. In terms of biological role, seed storage protein. The protein is 12S seed storage protein CRD (CRD) of Arabidopsis thaliana (Mouse-ear cress).